A 74-amino-acid polypeptide reads, in one-letter code: MGKKHVIVKPNARQASVSITPAGQLLVTVRAPASDGQANQELIALLAAYFGVPKSRIQLVKGHTSRHKVIELLD.

Belongs to the UPF0235 family.

In Thermosynechococcus vestitus (strain NIES-2133 / IAM M-273 / BP-1), this protein is UPF0235 protein tsr1994.